The sequence spans 126 residues: MEKDLKFTTSHEWVRDNGDGTVTVGISDHAQGLLGDVVFVDLPEVDDEVTTGEGFSLVESVKAASDIYSPVTGVIVEINEELEDSPELVNEEPYESGWIARIKLSDSSELESLIPSDTYLESLDEE.

The region spanning 21–103 (TVTVGISDHA…YESGWIARIK (83 aa)) is the Lipoyl-binding domain. Lysine 62 is subject to N6-lipoyllysine.

The protein belongs to the GcvH family. The glycine cleavage system is composed of four proteins: P, T, L and H. Requires (R)-lipoate as cofactor.

In terms of biological role, the glycine cleavage system catalyzes the degradation of glycine. The H protein shuttles the methylamine group of glycine from the P protein to the T protein. The sequence is that of Glycine cleavage system H protein from Aliivibrio fischeri (strain ATCC 700601 / ES114) (Vibrio fischeri).